The following is a 118-amino-acid chain: Small ribosomal subunit protein uS13 (118 aa).

The disordered stretch occupies residues 94–118 (GLPVRGQRTKTNARTRKGPRKPIKK).

This sequence belongs to the universal ribosomal protein uS13 family. Part of the 30S ribosomal subunit. Forms a loose heterodimer with protein S19. Forms two bridges to the 50S subunit in the 70S ribosome.

Located at the top of the head of the 30S subunit, it contacts several helices of the 16S rRNA. In the 70S ribosome it contacts the 23S rRNA (bridge B1a) and protein L5 of the 50S subunit (bridge B1b), connecting the 2 subunits; these bridges are implicated in subunit movement. Contacts the tRNAs in the A and P-sites. The sequence is that of Small ribosomal subunit protein uS13 from Mannheimia succiniciproducens (strain KCTC 0769BP / MBEL55E).